The primary structure comprises 419 residues: Putative zinc metalloprotease spyM18_2031 (419 aa).

Histidine 18 lines the Zn(2+) pocket. Glutamate 19 is a catalytic residue. Histidine 22 contacts Zn(2+). The next 4 helical transmembrane spans lie at 169 to 191 (LITN…ILLV), 301 to 323 (LAWS…FSLN), 343 to 365 (LESV…LIPI), and 392 to 411 (AYIT…AVTW). The 100-residue stretch at 175–274 (GPMNNFILGI…LKTVAVKPQK (100 aa)) folds into the PDZ domain.

This sequence belongs to the peptidase M50B family. Zn(2+) serves as cofactor.

The protein resides in the cell membrane. The polypeptide is Putative zinc metalloprotease spyM18_2031 (Streptococcus pyogenes serotype M18 (strain MGAS8232)).